The following is a 111-amino-acid chain: MEAKAKLSMIRISPRKMRLVADTIRNKAVSVAVATLKNLNKDAAEPILKLLNSAVANAVNNNGMEADKLYVKTIFVNEGPTLKRFRPRAHGRAYEIFKRTSHVVIVVSDEK.

The protein belongs to the universal ribosomal protein uL22 family. In terms of assembly, part of the 50S ribosomal subunit.

Functionally, this protein binds specifically to 23S rRNA; its binding is stimulated by other ribosomal proteins, e.g. L4, L17, and L20. It is important during the early stages of 50S assembly. It makes multiple contacts with different domains of the 23S rRNA in the assembled 50S subunit and ribosome. In terms of biological role, the globular domain of the protein is located near the polypeptide exit tunnel on the outside of the subunit, while an extended beta-hairpin is found that lines the wall of the exit tunnel in the center of the 70S ribosome. The polypeptide is Large ribosomal subunit protein uL22 (Mycoplasma capricolum subsp. capricolum (strain California kid / ATCC 27343 / NCTC 10154)).